The following is a 1086-amino-acid chain: Rh5-interacting protein (1086 aa).

The first 19 residues, methionine 1–alanine 19, serve as a signal peptide directing secretion. N-linked (GlcNAc...) asparagine glycans are attached at residues asparagine 103, asparagine 144, asparagine 228, asparagine 303, asparagine 334, asparagine 480, asparagine 498, asparagine 506, asparagine 526, and asparagine 646. EGF-like domains are found at residues arginine 287–glutamate 321 and leucine 325–tyrosine 362. EGF-like domains follow at residues serine 636–glutamate 675, aspartate 679–valine 715, lysine 719–isoleucine 753, tyrosine 818–isoleucine 854, serine 858–valine 897, lysine 901–leucine 938, and proline 942–valine 979. N-linked (GlcNAc...) asparagine glycosylation is found at asparagine 964 and asparagine 1021.

Component of the PfRH5 adhesion complex composed of 1 copy of CyRPA, RH5 and RIPR; the complex is formed during merozoite invasion of host erythrocytes specifically at the interface between the parasite and host membranes. Within the complex, interacts with CyRPA. CyRPA recruitment of RIPR to RH5-P113-BSG leads to the formation of the PfRH5 adhesion complex which probably in turn releases RH5 from P113 while maintaining the interaction of the PfRH5 adhesion complex with BSG. In terms of processing, proteolytically cleaved into two chains of 125kDa and 65kDa which remain associated. The cleavage occurs at the schizont stage prior to the release of merozoites. Post-translationally, contains disulfide bonds.

The protein localises to the secreted. It localises to the cytoplasmic vesicle. It is found in the secretory vesicle. The protein resides in the microneme lumen. Its subcellular location is the cell membrane. The protein localises to the host cell membrane. Functionally, essential for the invasion of host erythrocytes by blood stage merozoites. As part of the PfRH5 adhesion complex, facilitates the interaction of RH5 and human BSG required for the Ca(2+) release into the erythrocyte. This is Rh5-interacting protein (RIPR) from Plasmodium falciparum (isolate 3D7).